A 428-amino-acid polypeptide reads, in one-letter code: Enolase (428 aa).

Gln165 provides a ligand contact to (2R)-2-phosphoglycerate. Glu207 functions as the Proton donor in the catalytic mechanism. 3 residues coordinate Mg(2+): Asp244, Glu285, and Asp312. Lys337, Arg366, Ser367, and Lys388 together coordinate (2R)-2-phosphoglycerate. Residue Lys337 is the Proton acceptor of the active site.

It belongs to the enolase family. Component of the RNA degradosome, a multiprotein complex involved in RNA processing and mRNA degradation. It depends on Mg(2+) as a cofactor.

It is found in the cytoplasm. The protein localises to the secreted. It localises to the cell surface. The catalysed reaction is (2R)-2-phosphoglycerate = phosphoenolpyruvate + H2O. It functions in the pathway carbohydrate degradation; glycolysis; pyruvate from D-glyceraldehyde 3-phosphate: step 4/5. Its function is as follows. Catalyzes the reversible conversion of 2-phosphoglycerate (2-PG) into phosphoenolpyruvate (PEP). It is essential for the degradation of carbohydrates via glycolysis. This is Enolase from Coxiella burnetii (strain CbuK_Q154) (Coxiella burnetii (strain Q154)).